We begin with the raw amino-acid sequence, 171 residues long: Small ribosomal subunit protein uS13 (171 aa).

Residues 128 to 171 form a disordered region; that stretch reads HERGQKVRGQRTKSTGRTEGTIGVNVEAIKEEQAEDDAADGGEE. A compositionally biased stretch (acidic residues) spans 160 to 171; it reads QAEDDAADGGEE.

Belongs to the universal ribosomal protein uS13 family. Part of the 30S ribosomal subunit. Forms a loose heterodimer with protein S19. Forms two bridges to the 50S subunit in the 70S ribosome.

Functionally, located at the top of the head of the 30S subunit, it contacts several helices of the 16S rRNA. In the 70S ribosome it contacts the 23S rRNA (bridge B1a) and protein L5 of the 50S subunit (bridge B1b), connecting the 2 subunits; these bridges are implicated in subunit movement. This is Small ribosomal subunit protein uS13 from Halobacterium salinarum (strain ATCC 700922 / JCM 11081 / NRC-1) (Halobacterium halobium).